We begin with the raw amino-acid sequence, 419 residues long: UDP-N-acetylglucosamine 1-carboxyvinyltransferase (419 aa).

Residue 22 to 23 participates in phosphoenolpyruvate binding; the sequence is KN. A UDP-N-acetyl-alpha-D-glucosamine-binding site is contributed by arginine 91. Cysteine 115 serves as the catalytic Proton donor. Position 115 is a 2-(S-cysteinyl)pyruvic acid O-phosphothioketal (cysteine 115). Residues 120–124, 160–163, aspartate 305, and isoleucine 327 each bind UDP-N-acetyl-alpha-D-glucosamine; these read RPVDL and KVSV.

Belongs to the EPSP synthase family. MurA subfamily.

The protein localises to the cytoplasm. It carries out the reaction phosphoenolpyruvate + UDP-N-acetyl-alpha-D-glucosamine = UDP-N-acetyl-3-O-(1-carboxyvinyl)-alpha-D-glucosamine + phosphate. It participates in cell wall biogenesis; peptidoglycan biosynthesis. In terms of biological role, cell wall formation. Adds enolpyruvyl to UDP-N-acetylglucosamine. The polypeptide is UDP-N-acetylglucosamine 1-carboxyvinyltransferase (Sodalis glossinidius (strain morsitans)).